The sequence spans 237 residues: UPF0173 metal-dependent hydrolase HQ_3368A (237 aa).

Belongs to the UPF0173 family.

This chain is UPF0173 metal-dependent hydrolase HQ_3368A, found in Haloquadratum walsbyi (strain DSM 16790 / HBSQ001).